Consider the following 151-residue polypeptide: Deoxyuridine 5'-triphosphate nucleotidohydrolase (151 aa).

Substrate is bound by residues 70 to 72 (RSG), Asn83, 87 to 89 (LID), and Met97.

Belongs to the dUTPase family. Mg(2+) is required as a cofactor.

The enzyme catalyses dUTP + H2O = dUMP + diphosphate + H(+). Its pathway is pyrimidine metabolism; dUMP biosynthesis; dUMP from dCTP (dUTP route): step 2/2. Functionally, this enzyme is involved in nucleotide metabolism: it produces dUMP, the immediate precursor of thymidine nucleotides and it decreases the intracellular concentration of dUTP so that uracil cannot be incorporated into DNA. The sequence is that of Deoxyuridine 5'-triphosphate nucleotidohydrolase from Yersinia pseudotuberculosis serotype O:1b (strain IP 31758).